A 310-amino-acid polypeptide reads, in one-letter code: Solute carrier family 25 member 47 (310 aa).

Solcar repeat units lie at residues 1–80, 93–208, and 217–304; these read MDFV…CLAH, PTKA…LCEW, and PDVL…VLRL. Helical transmembrane passes span 3-23, 55-75, 98-114, 194-210, 219-239, and 280-298; these read FVAGAIGGVCGVAVGYPLDTV, GLSLPVCTVSLVSSVSFGTYH, ITLSGCASGLVRVFLTS, SFATYFLSYAMLCEWLT, VLGVLVAGGCAGVLAWAVATP, and LALNCCRAFPVNMVVFVAY.

Belongs to the mitochondrial carrier (TC 2.A.29) family. Specifically expressed in liver (at protein level).

It is found in the mitochondrion inner membrane. The protein localises to the mitochondrion outer membrane. The catalysed reaction is NAD(+)(in) = NAD(+)(out). It catalyses the reaction acetyl-CoA(in) = acetyl-CoA(out). Functionally, mitochondrial NAD(+) transporter that acts as a 'metabolic gate' in hepatic lipogenesis. Provides NAD(+) substrate to mitochondrial SIRT3 deacetylase and enables its NAD(+)-dependent activities in mitochondrial energy metabolism. This triggers downstream activation of PRKAA1/AMPK-alpha signaling cascade that negatively regulates sterol regulatory element-binding protein (SREBP) transcriptional activities and ATP-consuming lipogenesis to restore cellular energy balance. May transport other mitochondrial metabolites having an aromatic nucleotide and phosphate groups, such as acetyl-CoA. Does not transport amino acids. The transport mechanism remains to be elucidated. This Mus musculus (Mouse) protein is Solute carrier family 25 member 47.